The sequence spans 259 residues: Synaptophysin-like protein 1 (259 aa).

The Cytoplasmic segment spans residues 1 to 33 (MAPNIYLVRQRISRLGQRMSGFQINLNPLKEPL). Positions 28–237 (PLKEPLGFIK…NAWFVYKETS (210 aa)) constitute an MARVEL domain. Residues 34 to 54 (GFIKVLEWIASIFAFATCGGF) form a helical membrane-spanning segment. Residues 55–116 (KGQTEIQVNC…LIGDYSSSAQ (62 aa)) lie on the Vesicular side of the membrane. Residue N71 is glycosylated (N-linked (GlcNAc...) asparagine). Residues 117-137 (FYVTFAVFVFLYCIAALLLYV) traverse the membrane as a helical segment. The Cytoplasmic portion of the chain corresponds to 138 to 150 (GYTSLYLDSRKLP). A helical transmembrane segment spans residues 151–171 (MIDFVVTLVATFLWLVSTSAW). The Vesicular portion of the chain corresponds to 172 to 212 (AKALTDIKIATGHNIIDELPPCKKKAVLCYFGSVTSMGSLN). N-linked (GlcNAc...) asparagine glycosylation is present at N212. The helical transmembrane segment at 213 to 233 (VSVIFGFLNMILWGGNAWFVY) threads the bilayer. Topologically, residues 234-259 (KETSLHSPSNTSAPHSQGGIPPPTGI) are cytoplasmic.

This sequence belongs to the synaptophysin/synaptobrevin family.

The protein resides in the cytoplasmic vesicle membrane. Its subcellular location is the melanosome. The chain is Synaptophysin-like protein 1 (SYPL1) from Homo sapiens (Human).